The following is a 265-amino-acid chain: Imidazole glycerol phosphate synthase subunit HisF (265 aa).

Active-site residues include Asp-17 and Asp-136.

Belongs to the HisA/HisF family. Heterodimer of HisH and HisF.

The protein resides in the cytoplasm. The enzyme catalyses 5-[(5-phospho-1-deoxy-D-ribulos-1-ylimino)methylamino]-1-(5-phospho-beta-D-ribosyl)imidazole-4-carboxamide + L-glutamine = D-erythro-1-(imidazol-4-yl)glycerol 3-phosphate + 5-amino-1-(5-phospho-beta-D-ribosyl)imidazole-4-carboxamide + L-glutamate + H(+). It functions in the pathway amino-acid biosynthesis; L-histidine biosynthesis; L-histidine from 5-phospho-alpha-D-ribose 1-diphosphate: step 5/9. IGPS catalyzes the conversion of PRFAR and glutamine to IGP, AICAR and glutamate. The HisF subunit catalyzes the cyclization activity that produces IGP and AICAR from PRFAR using the ammonia provided by the HisH subunit. The protein is Imidazole glycerol phosphate synthase subunit HisF of Mycolicibacterium paratuberculosis (strain ATCC BAA-968 / K-10) (Mycobacterium paratuberculosis).